A 488-amino-acid chain; its full sequence is Probable Xaa-Pro aminopeptidase ATEG_00858 (488 aa).

Residues D273, D284, E417, and E456 each contribute to the Mn(2+) site.

The protein belongs to the peptidase M24B family. It depends on Mn(2+) as a cofactor.

The catalysed reaction is Release of any N-terminal amino acid, including proline, that is linked to proline, even from a dipeptide or tripeptide.. Functionally, catalyzes the removal of a penultimate prolyl residue from the N-termini of peptides. This Aspergillus terreus (strain NIH 2624 / FGSC A1156) protein is Probable Xaa-Pro aminopeptidase ATEG_00858.